Consider the following 203-residue polypeptide: MELLREFLRNYGERFKEELENLVKKYVQGEEDVVLLKMDERCLILPFLNVGDFFYMKARELTEPVKLEVLQKRDSEVLARAISYEETYIEKRQHVRVQPDKPIPVYIKEKDTVGSILDISVGGIGVFLKEKVVEPEEVVTLEFELEGEEIKTKGECRYTIPYRAGYRAGFKFVDLSTRYENIIGRYVMKRQMEILKELKESMI.

One can recognise a PilZ domain in the interval 90-188; it reads EKRQHVRVQP…YENIIGRYVM (99 aa).

The protein to A.aeolicus aq_820 and aq_1583.

This is an uncharacterized protein from Aquifex aeolicus (strain VF5).